The primary structure comprises 339 residues: Biotin synthase (339 aa).

The region spanning 55-282 (NAVQLSTLLS…KAVVRLSAGR (228 aa)) is the Radical SAM core domain. [4Fe-4S] cluster is bound by residues Cys70, Cys74, and Cys77. [2Fe-2S] cluster-binding residues include Cys114, Cys145, Cys205, and Arg277.

This sequence belongs to the radical SAM superfamily. Biotin synthase family. In terms of assembly, homodimer. [4Fe-4S] cluster serves as cofactor. The cofactor is [2Fe-2S] cluster.

The enzyme catalyses (4R,5S)-dethiobiotin + (sulfur carrier)-SH + 2 reduced [2Fe-2S]-[ferredoxin] + 2 S-adenosyl-L-methionine = (sulfur carrier)-H + biotin + 2 5'-deoxyadenosine + 2 L-methionine + 2 oxidized [2Fe-2S]-[ferredoxin]. The protein operates within cofactor biosynthesis; biotin biosynthesis; biotin from 7,8-diaminononanoate: step 2/2. In terms of biological role, catalyzes the conversion of dethiobiotin (DTB) to biotin by the insertion of a sulfur atom into dethiobiotin via a radical-based mechanism. This chain is Biotin synthase, found in Burkholderia orbicola (strain MC0-3).